Reading from the N-terminus, the 198-residue chain is Pyridoxal 5'-phosphate synthase subunit PdxT (198 aa).

L-glutamine is bound at residue 50–52 (GES). Cysteine 82 acts as the Nucleophile in catalysis. L-glutamine-binding positions include arginine 111 and 140-141 (IR). Residues histidine 177 and glutamate 179 each act as charge relay system in the active site.

It belongs to the glutaminase PdxT/SNO family. As to quaternary structure, in the presence of PdxS, forms a dodecamer of heterodimers. Only shows activity in the heterodimer.

It carries out the reaction aldehydo-D-ribose 5-phosphate + D-glyceraldehyde 3-phosphate + L-glutamine = pyridoxal 5'-phosphate + L-glutamate + phosphate + 3 H2O + H(+). It catalyses the reaction L-glutamine + H2O = L-glutamate + NH4(+). Its pathway is cofactor biosynthesis; pyridoxal 5'-phosphate biosynthesis. Its function is as follows. Catalyzes the hydrolysis of glutamine to glutamate and ammonia as part of the biosynthesis of pyridoxal 5'-phosphate. The resulting ammonia molecule is channeled to the active site of PdxS. The polypeptide is Pyridoxal 5'-phosphate synthase subunit PdxT (Leifsonia xyli subsp. xyli (strain CTCB07)).